The following is a 504-amino-acid chain: Sodium/proline symporter (504 aa).

Helical transmembrane passes span 8–28, 50–70, 73–93, 127–147, 163–183, 189–209, 240–260, 281–301, 324–344, 374–394, 405–425, 434–454, and 461–481; these read LITF…AYYY, SAGA…AVYL, LVEG…WLLV, LVSA…GVVA, ALWY…FLAV, IQAT…LLSF, LGLL…HILA, WMVL…PYFF, LLFN…AVMS, ELVW…IWIA, VEFA…FSLF, AMAG…VVPA, and VYEM…ISLL.

Belongs to the sodium:solute symporter (SSF) (TC 2.A.21) family.

The protein localises to the cell inner membrane. The catalysed reaction is L-proline(in) + Na(+)(in) = L-proline(out) + Na(+)(out). In terms of biological role, catalyzes the sodium-dependent uptake of extracellular L-proline. This is Sodium/proline symporter (putP) from Haemophilus influenzae (strain ATCC 51907 / DSM 11121 / KW20 / Rd).